A 160-amino-acid chain; its full sequence is Putative 4-hydroxy-4-methyl-2-oxoglutarate aldolase (160 aa).

Residues 78–81 and R100 each bind substrate; that span reads GDVI. Residue D101 participates in a divalent metal cation binding.

It belongs to the class II aldolase/RraA-like family. In terms of assembly, homotrimer. A divalent metal cation serves as cofactor.

It carries out the reaction 4-hydroxy-4-methyl-2-oxoglutarate = 2 pyruvate. The enzyme catalyses oxaloacetate + H(+) = pyruvate + CO2. Functionally, catalyzes the aldol cleavage of 4-hydroxy-4-methyl-2-oxoglutarate (HMG) into 2 molecules of pyruvate. Also contains a secondary oxaloacetate (OAA) decarboxylase activity due to the common pyruvate enolate transition state formed following C-C bond cleavage in the retro-aldol and decarboxylation reactions. In Mycolicibacterium paratuberculosis (strain ATCC BAA-968 / K-10) (Mycobacterium paratuberculosis), this protein is Putative 4-hydroxy-4-methyl-2-oxoglutarate aldolase.